We begin with the raw amino-acid sequence, 761 residues long: DNA topoisomerase 1 (761 aa).

Residues 6 to 143 (TALIICEKPS…KRMRFSSLTK (138 aa)) enclose the Toprim domain. 2 residues coordinate Mg(2+): E12 and D111. The Topo IA-type catalytic domain occupies 157–569 (DYGLVDAGES…EAEKRLRKIL (413 aa)). The interaction with DNA stretch occupies residues 196–201 (SVGRVQ). Y315 acts as the O-(5'-phospho-DNA)-tyrosine intermediate in catalysis. C4-type zinc fingers lie at residues 600 to 626 (CPKC…YPEC), 680 to 706 (CPKC…YPKC), and 721 to 747 (CPKC…YPKC).

The protein belongs to the type IA topoisomerase family. As to quaternary structure, monomer. The cofactor is Mg(2+).

The catalysed reaction is ATP-independent breakage of single-stranded DNA, followed by passage and rejoining.. Its function is as follows. Releases the supercoiling and torsional tension of DNA, which is introduced during the DNA replication and transcription, by transiently cleaving and rejoining one strand of the DNA duplex. Introduces a single-strand break via transesterification at a target site in duplex DNA. The scissile phosphodiester is attacked by the catalytic tyrosine of the enzyme, resulting in the formation of a DNA-(5'-phosphotyrosyl)-enzyme intermediate and the expulsion of a 3'-OH DNA strand. The free DNA strand then undergoes passage around the unbroken strand, thus removing DNA supercoils. Finally, in the religation step, the DNA 3'-OH attacks the covalent intermediate to expel the active-site tyrosine and restore the DNA phosphodiester backbone. The sequence is that of DNA topoisomerase 1 from Methanocaldococcus jannaschii (strain ATCC 43067 / DSM 2661 / JAL-1 / JCM 10045 / NBRC 100440) (Methanococcus jannaschii).